The chain runs to 53 residues: Mannose/glucose-specific lectin alpha 2 chain (53 aa).

The protein belongs to the leguminous lectin family. As to quaternary structure, tetramer of two alpha and two beta chains.

The protein is Mannose/glucose-specific lectin alpha 2 chain of Lathyrus ochrus (Cyprus-vetch).